The sequence spans 97 residues: DNA-directed RNA polymerase subunit omega (97 aa).

It belongs to the RNA polymerase subunit omega family. As to quaternary structure, the RNAP catalytic core consists of 2 alpha, 1 beta, 1 beta' and 1 omega subunit. When a sigma factor is associated with the core the holoenzyme is formed, which can initiate transcription.

It carries out the reaction RNA(n) + a ribonucleoside 5'-triphosphate = RNA(n+1) + diphosphate. Promotes RNA polymerase assembly. Latches the N- and C-terminal regions of the beta' subunit thereby facilitating its interaction with the beta and alpha subunits. The protein is DNA-directed RNA polymerase subunit omega of Coxiella burnetii (strain Dugway 5J108-111).